A 662-amino-acid chain; its full sequence is Protein associated with UVRAG as autophagy enhancer (662 aa).

Disordered regions lie at residues 1–34 (MVSQSTVRQDSPVEPWEGISDHSGIIDGSPRLLN) and 58–131 (DVQQ…SLSS). Residues 58–71 (DVQQQPQDLQSQVP) are compositionally biased toward low complexity. A compositionally biased stretch (polar residues) spans 100–113 (AETTLSEDTTDSVG). Over residues 114–131 (SASPHGSSEKSSSFSLSS) the composition is skewed to low complexity. Residue S157 is modified to Phosphoserine; by MTOR. The interaction with UVRAG stretch occupies residues 196 to 235 (EVFVLPVDVEKENAHFYVADMIISAMEKMKCNILSQQQTE). K483, K523, K533, K573, and K633 each carry N6-acetyllysine.

In terms of assembly, interacts with UVRAG; the interaction is direct and promotes association with the PI3K/PI3KC3 and HOPS complexes. Interacts with STX17. In terms of processing, phosphorylated by MTOR at Ser-157 under nutrient-rich conditions. Phosphorylation prevents acetylation by KAT5/TIP60 and impairs RUBCNL/PACER function and autophagosome maturation. Under autophagy induction, Phosphorylation by MTOR is repressed, enabling acetylation by KAT5/TIP60. Acetylated by KAT5/TIP60 under autophagy induction, promoting autophagosome maturation and lipid metabolism. Acetylation is prevented by phosphorylation by MTOR. Lys-483 and Lys-573 constitute the key sites for tuning function in autophagy. In terms of tissue distribution, expressed weakly in cervical carcinoma cell lines.

The protein localises to the cytoplasmic vesicle. It localises to the autophagosome membrane. Its function is as follows. Regulator of autophagy that promotes autophagosome maturation by facilitating the biogenesis of phosphatidylinositol 3-phosphate (PtdIns(3)P) in late steps of autophagy. Acts by antagonizing RUBCN, thereby stimulating phosphatidylinositol 3-kinase activity of the PI3K/PI3KC3 complex. Following anchorage to the autophagosomal SNARE STX17, promotes the recruitment of PI3K/PI3KC3 and HOPS complexes to the autophagosome to regulate the fusion specificity of autophagosomes with late endosomes/lysosomes. Binds phosphoinositides phosphatidylinositol 3-phosphate (PtdIns(3)P), 4-phosphate (PtdIns(4)P) and 5-phosphate (PtdIns(5)P). In addition to its role in autophagy, acts as a regulator of lipid and glycogen homeostasis. May act as a tumor suppressor. This chain is Protein associated with UVRAG as autophagy enhancer, found in Homo sapiens (Human).